The sequence spans 531 residues: Squalene epoxidase 1 (531 aa).

The chain crosses the membrane as a helical span at residues 9 to 29 (ILPLLISSLLISFVAFYGFFV). FAD contacts are provided by residues 70-71 (VA), 90-91 (ER), R98, R169, V185, D347, and M360. 2 helical membrane passes run 458-478 (LVCHFFAVAVYGVIRLLIPFP) and 483-503 (IWLGAKLISGASGIIFPIIKA).

The protein belongs to the squalene monooxygenase family. FAD serves as cofactor. As to expression, expressed in seedlings, leaves, stems, inflorescences, sepals, style and siliques. Expressed in expanded cotyledons, root tips and cortical cells of the root elongation zone, but not in root hair cells. In leaves, expressed in most cells, with a very strong expression in stomata.

It is found in the membrane. The catalysed reaction is squalene + reduced [NADPH--hemoprotein reductase] + O2 = (S)-2,3-epoxysqualene + oxidized [NADPH--hemoprotein reductase] + H2O + H(+). The protein operates within terpene metabolism; lanosterol biosynthesis; lanosterol from farnesyl diphosphate: step 2/3. Functionally, catalyzes the stereospecific oxidation of squalene to (S)-2,3-epoxysqualene, and is considered to be a rate-limiting enzyme in steroid biosynthesis. Can produce not only oxidosqualene, but also 2,3:22,23-dioxidosqualene. Main squalene epoxidase in the root. Sqe1 mutants may show defects in membrane lipid rafts, impairing the correct localization of RHD2 NADPH oxidase and the proper polarized production of ROS. The polypeptide is Squalene epoxidase 1 (SQE1) (Arabidopsis thaliana (Mouse-ear cress)).